Consider the following 531-residue polypeptide: Peroxinectin A (531 aa).

An N-terminal signal peptide occupies residues 1-21 (MRLNLISFFIIFTILVSISNS). A glycan (N-linked (GlcNAc...) asparagine) is linked at Asn62. His101 serves as the catalytic Proton acceptor. N-linked (GlcNAc...) asparagine glycosylation is found at Asn131 and Asn338.

It belongs to the peroxidase family.

The protein localises to the secreted. It carries out the reaction 2 a phenolic donor + H2O2 = 2 a phenolic radical donor + 2 H2O. This Dictyostelium discoideum (Social amoeba) protein is Peroxinectin A (poxA).